Consider the following 20-residue polypeptide: Elongation factor Tu (20 aa).

The protein belongs to the GTP-binding elongation factor family. EF-Tu/EF-1A subfamily. Monomer.

Its subcellular location is the cytoplasm. This protein promotes the GTP-dependent binding of aminoacyl-tRNA to the A-site of ribosomes during protein biosynthesis. The protein is Elongation factor Tu (tuf) of Mycoplasmopsis synoviae (Mycoplasma synoviae).